The sequence spans 32 residues: MENSSSSSKALLPASGSPSPWFICRMLSKVTL.

This is an uncharacterized protein from Saccharomyces cerevisiae (strain ATCC 204508 / S288c) (Baker's yeast).